A 242-amino-acid polypeptide reads, in one-letter code: Glucosamine-6-phosphate deaminase (242 aa).

The active-site Proton acceptor; for enolization step is Asp-67. Catalysis depends on Asn-136, which acts as the For ring-opening step. Residue His-138 is the Proton acceptor; for ring-opening step of the active site. The active-site For ring-opening step is Glu-143.

It belongs to the glucosamine/galactosamine-6-phosphate isomerase family. NagB subfamily.

It carries out the reaction alpha-D-glucosamine 6-phosphate + H2O = beta-D-fructose 6-phosphate + NH4(+). It functions in the pathway amino-sugar metabolism; N-acetylneuraminate degradation; D-fructose 6-phosphate from N-acetylneuraminate: step 5/5. In terms of biological role, catalyzes the reversible isomerization-deamination of glucosamine 6-phosphate (GlcN6P) to form fructose 6-phosphate (Fru6P) and ammonium ion. In Clostridium perfringens (strain 13 / Type A), this protein is Glucosamine-6-phosphate deaminase.